The sequence spans 273 residues: Large ribosomal subunit protein uL2 (273 aa).

Disordered stretches follow at residues 34-54 (LEKK…TRHI) and 223-273 (VAMN…RRRK).

The protein belongs to the universal ribosomal protein uL2 family. Part of the 50S ribosomal subunit. Forms a bridge to the 30S subunit in the 70S ribosome.

Functionally, one of the primary rRNA binding proteins. Required for association of the 30S and 50S subunits to form the 70S ribosome, for tRNA binding and peptide bond formation. It has been suggested to have peptidyltransferase activity; this is somewhat controversial. Makes several contacts with the 16S rRNA in the 70S ribosome. The protein is Large ribosomal subunit protein uL2 of Azotobacter vinelandii (strain DJ / ATCC BAA-1303).